Consider the following 473-residue polypeptide: Photosystem II CP43 reaction center protein (473 aa).

Residues 1–14 constitute a propeptide that is removed on maturation; sequence MKILYSLRRFYHVE. The residue at position 15 (Thr15) is an N-acetylthreonine. Residue Thr15 is modified to Phosphothreonine. Helical transmembrane passes span 69–93, 134–155, 178–200, 255–275, and 291–312; these read LFEVAHFVPEKPMYEQGLILLPHLA, LLGPETLEESFPFFGYVWKDRN, KALYFGGVYDTWAPGGGDVRKIT, KPFAWARRAFVWSGEAYLSYS, and WFNNTAYPSEFYGPTGPEASQA. Glu367 contributes to the [CaMn4O5] cluster binding site. The chain crosses the membrane as a helical span at residues 447–471; the sequence is RARAAAAGFEKGIDRDLEPVLYMTP.

It belongs to the PsbB/PsbC family. PsbC subfamily. In terms of assembly, PSII is composed of 1 copy each of membrane proteins PsbA, PsbB, PsbC, PsbD, PsbE, PsbF, PsbH, PsbI, PsbJ, PsbK, PsbL, PsbM, PsbT, PsbX, PsbY, PsbZ, Psb30/Ycf12, at least 3 peripheral proteins of the oxygen-evolving complex and a large number of cofactors. It forms dimeric complexes. Binds multiple chlorophylls and provides some of the ligands for the Ca-4Mn-5O cluster of the oxygen-evolving complex. It may also provide a ligand for a Cl- that is required for oxygen evolution. PSII binds additional chlorophylls, carotenoids and specific lipids. serves as cofactor.

It localises to the plastid. It is found in the chloroplast thylakoid membrane. In terms of biological role, one of the components of the core complex of photosystem II (PSII). It binds chlorophyll and helps catalyze the primary light-induced photochemical processes of PSII. PSII is a light-driven water:plastoquinone oxidoreductase, using light energy to abstract electrons from H(2)O, generating O(2) and a proton gradient subsequently used for ATP formation. The protein is Photosystem II CP43 reaction center protein of Sorghum bicolor (Sorghum).